Consider the following 130-residue polypeptide: Ribonuclease P protein component 2 (130 aa).

It belongs to the eukaryotic/archaeal RNase P protein component 2 family. As to quaternary structure, consists of a catalytic RNA component and at least 5 protein subunits.

Its subcellular location is the cytoplasm. It carries out the reaction Endonucleolytic cleavage of RNA, removing 5'-extranucleotides from tRNA precursor.. Part of ribonuclease P, a protein complex that generates mature tRNA molecules by cleaving their 5'-ends. This Methanococcus maripaludis (strain DSM 14266 / JCM 13030 / NBRC 101832 / S2 / LL) protein is Ribonuclease P protein component 2.